Reading from the N-terminus, the 391-residue chain is 23S rRNA (uracil(747)-C(5))-methyltransferase RlmC (391 aa).

Positions 5, 13, 16, and 95 each coordinate [4Fe-4S] cluster. Residues Q220, F249, E276, and N322 each contribute to the S-adenosyl-L-methionine site. Catalysis depends on C349, which acts as the Nucleophile.

Belongs to the class I-like SAM-binding methyltransferase superfamily. RNA M5U methyltransferase family. RlmC subfamily.

The enzyme catalyses uridine(747) in 23S rRNA + S-adenosyl-L-methionine = 5-methyluridine(747) in 23S rRNA + S-adenosyl-L-homocysteine + H(+). Catalyzes the formation of 5-methyl-uridine at position 747 (m5U747) in 23S rRNA. The chain is 23S rRNA (uracil(747)-C(5))-methyltransferase RlmC from Actinobacillus pleuropneumoniae serotype 3 (strain JL03).